Reading from the N-terminus, the 434-residue chain is MKRILLSSDRSGSGKTLITSAIMRALSKKYKVRGFKAGPDFIDPGYHKIATGFPSINLDLWMMGKNNVKRSLAKYGKEFDIGIIEGVMGLYDGVDTLYSTYELAKVTKTPIILIINCSNIGSTVGAIVKGLKYYRSDVSIRGVIFNKIASETHYNYCRNAVEDVEVLGYVPFDKNLEIKSRHLGLVTVEDNREVQNLIRYASELVEKYVDLDKIYEMASDEDLEIDLPEDNESNGVKRKMAIAYDPAFSFYYQENLDILKNKYELEFFSPLNNEYVEDAEAIYIGGGYPELHLNELEKSTRTKKWLKNMSYAGVKIYAECGGLMYLSKNLIDENNKNHSMTGIFDIDIKTKDKLTIGYTELEAVKENFIVNKNNVVRGHEFHVSKPISVNEKEFVFKVRIGKGIINKLDGVKSNNTVASYSHLHFSNFQLRIVF.

The 192-residue stretch at 239–430 (KMAIAYDPAF…SHLHFSNFQL (192 aa)) folds into the GATase cobBQ-type domain. Cys-320 functions as the Nucleophile in the catalytic mechanism.

The protein belongs to the CobB/CbiA family. Requires Mg(2+) as cofactor.

It catalyses the reaction cob(II)yrinate + 2 L-glutamine + 2 ATP + 2 H2O = cob(II)yrinate a,c diamide + 2 L-glutamate + 2 ADP + 2 phosphate + 2 H(+). It functions in the pathway cofactor biosynthesis; adenosylcobalamin biosynthesis; cob(II)yrinate a,c-diamide from sirohydrochlorin (anaerobic route): step 10/10. In terms of biological role, catalyzes the ATP-dependent amidation of the two carboxylate groups at positions a and c of cobyrinate, using either L-glutamine or ammonia as the nitrogen source. This Saccharolobus solfataricus (strain ATCC 35092 / DSM 1617 / JCM 11322 / P2) (Sulfolobus solfataricus) protein is Cobyrinate a,c-diamide synthase.